The primary structure comprises 310 residues: Aspartate carbamoyltransferase catalytic subunit 1 (310 aa).

Carbamoyl phosphate-binding residues include arginine 55 and threonine 56. Residue lysine 85 participates in L-aspartate binding. Carbamoyl phosphate is bound by residues arginine 106, histidine 134, and glutamine 137. L-aspartate contacts are provided by arginine 167 and arginine 228. The carbamoyl phosphate site is built by leucine 266 and proline 267.

Belongs to the aspartate/ornithine carbamoyltransferase superfamily. ATCase family. In terms of assembly, heterododecamer (2C3:3R2) of six catalytic PyrB chains organized as two trimers (C3), and six regulatory PyrI chains organized as three dimers (R2).

The catalysed reaction is carbamoyl phosphate + L-aspartate = N-carbamoyl-L-aspartate + phosphate + H(+). The protein operates within pyrimidine metabolism; UMP biosynthesis via de novo pathway; (S)-dihydroorotate from bicarbonate: step 2/3. In terms of biological role, catalyzes the condensation of carbamoyl phosphate and aspartate to form carbamoyl aspartate and inorganic phosphate, the committed step in the de novo pyrimidine nucleotide biosynthesis pathway. This chain is Aspartate carbamoyltransferase catalytic subunit 1, found in Shewanella halifaxensis (strain HAW-EB4).